The sequence spans 710 residues: Solute carrier family 15 member 1 (710 aa).

Residues 1 to 21 (MGMSKSRGCFGYPLSIFFIVV) form a helical membrane-spanning segment. At 22-53 (NEFCERFSYYGMRALLVLYFRNFLGWDDDLST) the chain is on the extracellular side. Residues 54-74 (AIYHTFVALCYLTPILGALIA) form a helical membrane-spanning segment. Residues 75–82 (DSWLGKFK) lie on the Cytoplasmic side of the membrane. Residues 83 to 103 (TIVSLSIVYTIGQAVISVSSI) traverse the membrane as a helical segment. Over 104 to 118 (NDLTDHDHDGSPNNL) the chain is Extracellular. Residues 119–139 (PLHVALSMIGLALIALGTGGI) form a helical membrane-spanning segment. Topologically, residues 140–161 (KPCVSAFGGDQFEEGQEKQRNR) are cytoplasmic. The chain crosses the membrane as a helical span at residues 162–182 (FFSIFYLAINAGSLLSTIITP). Residues 183 to 198 (ILRVQQCGIHSQQACY) are Extracellular-facing. A helical transmembrane segment spans residues 199 to 219 (PLAFGVPAALMAVALIVFVLG). Over 220–276 (SGMYKKFQPQGNIMGKVAKCIRFAIKNRFRHRSKAFPKRNHWLDWAKEKYDERLISQ) the chain is Cytoplasmic. The helical transmembrane segment at 277–297 (IKIMTKVMFLYIPLPMFWALF) threads the bilayer. Residues 298–327 (DQQGSRWTLQATTMTGKIGTIEIQPDQMQT) lie on the Extracellular side of the membrane. A helical transmembrane segment spans residues 328-348 (VNAILIVIMVPIVDAVVYPLI). At 349–361 (AKCGFNFTSLKKM) the chain is on the cytoplasmic side. The helical transmembrane segment at 362 to 382 (TVGMFLASMAFVVAAIVQVEI) threads the bilayer. Over 383-586 (DKTLPVFPSG…PPNTVNMALQ (204 aa)) the chain is Extracellular. Residues 383–586 (DKTLPVFPSG…PPNTVNMALQ (204 aa)) are extracellular domain (ECD). N-linked (GlcNAc...) asparagine glycosylation is found at N415, N439, N510, N532, and N539. The chain crosses the membrane as a helical span at residues 587 to 607 (IPQYFLLTCGEVVFSVTGLEF). The Cytoplasmic segment spans residues 608 to 621 (SYSQAPSNMKSVLQ). The helical transmembrane segment at 622-642 (AGWLLTVAIGNIIVLIVAEAG) threads the bilayer. Topologically, residues 643–647 (HFDKQ) are extracellular. Residues 648–668 (WAEYVLFASLLLVVCIIFAIM) form a helical membrane-spanning segment. The Cytoplasmic portion of the chain corresponds to 669 to 710 (ARFYTYINPAEIEAQFDEDEKKKGVGKENPYSSLEPVSQTNM). The disordered stretch occupies residues 687–710 (DEKKKGVGKENPYSSLEPVSQTNM). A compositionally biased stretch (polar residues) spans 698–710 (PYSSLEPVSQTNM).

It belongs to the major facilitator superfamily. Proton-dependent oligopeptide transporter (POT/PTR) (TC 2.A.17) family. In terms of assembly, interacts (via extracellular domain region) with trypsin. In terms of tissue distribution, highly expressed in small intestine. Expression is restricted to pinealocytes.

It localises to the apical cell membrane. It catalyses the reaction a dipeptide(out) + H(+)(out) = a dipeptide(in) + H(+)(in). The catalysed reaction is an L-amino acid tripeptide(out) + H(+)(out) = an L-amino acid tripeptide(in) + H(+)(in). The enzyme catalyses L-alanyl-L-lysine(out) + H(+)(out) = L-alanyl-L-lysine(in) + H(+)(in). It carries out the reaction L-alanyl-L-proline(out) + H(+)(out) = L-alanyl-L-proline(in) + H(+)(in). It catalyses the reaction L-alanyl-L-valine(out) + H(+)(out) = L-alanyl-L-valine(in) + H(+)(in). The catalysed reaction is carnosine(out) + H(+)(out) = carnosine(in) + H(+)(in). The enzyme catalyses glycyl-L-glutamine(out) + H(+)(out) = glycyl-L-glutamine(in) + H(+)(in). It carries out the reaction glycyl-L-leucine(out) + H(+)(out) = glycyl-L-leucine(in) + H(+)(in). It catalyses the reaction glycyl-L-proline(out) + H(+)(out) = glycyl-L-proline(in) + H(+)(in). The catalysed reaction is glycyl-sarcosine(out) + H(+)(out) = glycyl-sarcosine(in) + H(+)(in). The enzyme catalyses L-leucyl-L-leucine(out) + H(+)(out) = L-leucyl-L-leucine(in) + H(+)(in). It carries out the reaction L-leucyl-L-proline(out) + H(+)(out) = L-leucyl-L-proline(in) + H(+)(in). It catalyses the reaction L-phenylalanyl-L-leucine(out) + H(+)(out) = L-phenylalanyl-L-leucine(in) + H(+)(in). The catalysed reaction is L-phenylalanyl-L-phenylalanine(out) + H(+)(out) = L-phenylalanyl-L-phenylalanine(in) + H(+)(in). The enzyme catalyses L-lysyl-glycine(out) + H(+)(out) = L-lysyl-glycine(in) + H(+)(in). It carries out the reaction L-tyrosylglycine(out) + H(+)(out) = L-tyrosylglycine(in) + H(+)(in). It catalyses the reaction L-alanyl-L-aspartate(out) + 2 H(+)(out) = L-alanyl-L-aspartate(in) + 2 H(+)(in). The catalysed reaction is L-aspartyl-glycine(out) + 2 H(+)(out) = L-aspartyl-glycine(in) + 2 H(+)(in). The enzyme catalyses glycyl-L-aspartate(out) + 2 H(+)(out) = glycyl-L-aspartate(in) + 2 H(+)(in). It carries out the reaction glycyl-L-glutamate(out) + 2 H(+)(out) = glycyl-L-glutamate(in) + 2 H(+)(in). It catalyses the reaction L-alanyl-L-leucyl-L-alanine(out) + H(+)(out) = L-alanyl-L-leucyl-L-alanine(in) + H(+)(in). The catalysed reaction is L-alanyl-L-prolylglycine(out) + H(+)(out) = L-alanyl-L-prolylglycine(in) + H(+)(in). The enzyme catalyses glycylglycyl-L-isoleucine(out) + H(+)(out) = glycylglycyl-L-isoleucine(in) + H(+)(in). It carries out the reaction glycylglycyl-L-proline(out) + H(+)(out) = glycylglycyl-L-proline(in) + H(+)(in). It catalyses the reaction L-methionyl-L-phenylalanyl-L-methionine(out) + H(+)(out) = L-methionyl-L-phenylalanyl-L-methionine(in) + H(+)(in). The catalysed reaction is N-acetyl-D-muramoyl-L-alanyl-D-isoglutamine(out) + 2 H(+)(out) = N-acetyl-D-muramoyl-L-alanyl-D-isoglutamine(in) + 2 H(+)(in). The enzyme catalyses N(alpha)-formyl-L-methionyl-L-leucyl-L-phenylalanine(out) + 2 H(+)(out) = N(alpha)-formyl-L-methionyl-L-leucyl-L-phenylalanine(in) + 2 H(+)(in). Functionally, electrogenic proton-coupled amino-acid transporter that transports oligopeptides of 2 to 4 amino acids with a preference for dipeptides. Transports neutral and monovalently charged peptides with a proton to peptide stoichiometry of 1:1 or 2:1. Primarily responsible for the absorption of dietary di- and tripeptides from the small intestinal lumen. Mediates transepithelial transport of muramyl and N-formylated bacterial dipeptides contributing to recognition of pathogenic bacteria by the mucosal immune system. This chain is Solute carrier family 15 member 1 (Slc15a1), found in Rattus norvegicus (Rat).